The primary structure comprises 149 residues: Large ribosomal subunit protein bL9 (149 aa).

The protein belongs to the bacterial ribosomal protein bL9 family.

Binds to the 23S rRNA. The chain is Large ribosomal subunit protein bL9 from Campylobacter curvus (strain 525.92).